A 126-amino-acid chain; its full sequence is Fluoride-specific ion channel FluC (126 aa).

A run of 4 helical transmembrane segments spans residues 3–23 (PLGF…RWGL), 36–56 (YGTL…VGFF), 68–88 (LLAI…SSEA), and 99–119 (WALL…ALGL). 2 residues coordinate Na(+): Gly76 and Thr79.

The protein belongs to the fluoride channel Fluc/FEX (TC 1.A.43) family.

It localises to the cell inner membrane. It catalyses the reaction fluoride(in) = fluoride(out). Na(+) is not transported, but it plays an essential structural role and its presence is essential for fluoride channel function. Its function is as follows. Fluoride-specific ion channel. Important for reducing fluoride concentration in the cell, thus reducing its toxicity. In Cupriavidus pinatubonensis (strain JMP 134 / LMG 1197) (Cupriavidus necator (strain JMP 134)), this protein is Fluoride-specific ion channel FluC.